A 199-amino-acid chain; its full sequence is V-type ATP synthase subunit E (199 aa).

The protein belongs to the V-ATPase E subunit family.

Functionally, produces ATP from ADP in the presence of a proton gradient across the membrane. The polypeptide is V-type ATP synthase subunit E (atpE) (Borreliella burgdorferi (strain ATCC 35210 / DSM 4680 / CIP 102532 / B31) (Borrelia burgdorferi)).